We begin with the raw amino-acid sequence, 648 residues long: Transcription termination factor FttA (648 aa).

Residues 9 to 76 (DDILKEIREI…ISVRPDPDIL (68 aa)) form a KHa region. Residues 77–144 (LPPEKAEELI…WAPRVVRTPP (68 aa)) form a KHb region. The metallo-beta-lactamase N-terminus stretch occupies residues 185 to 395 (WIRITGLGGF…LVMESTYGGS (211 aa)). Zn(2+) is bound by residues His253, His255, Asp257, His258, His341, and Asp364. The segment at 396–589 (NDYQMPREEA…MEVHTIDGFS (194 aa)) is beta-Casp. Residues 590-648 (GHADRRELMSYVARVRPRPERIITVHGEAHKCLDLSSSIHKKFGISTRAPNNLDAIRLK) are metallo-beta-lactamase C-terminus. His615 is a Zn(2+) binding site.

It belongs to the metallo-beta-lactamase superfamily. RNA-metabolizing metallo-beta-lactamase-like family. FttA subfamily. In terms of assembly, homodimer. Probably interacts transiently with RNA polymerase (RNAP), (via at least the RNAP stalk subunits Rpo4 and Rpo7), interacts transiently with the Spt4-Spt5 complex. Zn(2+) serves as cofactor.

Transcription termination is stimulated by the Spt4-Spt5 complex. Dipicolinic acid inhibits FttA-mediated termination in vitro and inhibits growth in vivo. Functionally, terminates transcription on the whole genome. Termination is linked to FttA-mediated RNA cleavage and does not require NTP hydrolysis. Cleaves endonucleolytically at the RNA exit channel of RNA polymerase (RNAP); the 5'-3' exonuclease activity of this protein degrades the nascent RNA released from RNAP. Facilitates transcription termination; addition of this factor to stalled transcription elongation complexes (TEC) promotes nascent transcript cleavage and releases RNA polymerase (RNAP) from DNA in vitro. Transcription termination competes with productive transcription elongation. Termination is stimulated by C-rich transcripts and inhibited by G-rich transcripts; the Spt4-Spt5 complex enhances termination on C-less transcripts. Yields an approximately 100 nucleotide RNA, consistent with endonucleolytic cleavage at the RNA exit channel of RNAP. The polypeptide is Transcription termination factor FttA (Thermococcus kodakarensis (strain ATCC BAA-918 / JCM 12380 / KOD1) (Pyrococcus kodakaraensis (strain KOD1))).